Consider the following 462-residue polypeptide: Argininosuccinate lyase (462 aa).

Belongs to the lyase 1 family. Argininosuccinate lyase subfamily.

The protein localises to the cytoplasm. It catalyses the reaction 2-(N(omega)-L-arginino)succinate = fumarate + L-arginine. It functions in the pathway amino-acid biosynthesis; L-arginine biosynthesis; L-arginine from L-ornithine and carbamoyl phosphate: step 3/3. In Nitratiruptor sp. (strain SB155-2), this protein is Argininosuccinate lyase.